The following is a 50-amino-acid chain: Mating-type pheromone BAP1(1) (50 aa).

Residues Met1 to Trp32 form a disordered region. A compositionally biased stretch (low complexity) spans Ser16–Ala26. Cysteine methyl ester is present on Cys47. A lipid anchor (S-farnesyl cysteine) is attached at Cys47. A propeptide spans Val48 to His50 (removed in mature form).

Its subcellular location is the cell membrane. Activates B-regulated development. The sequence is that of Mating-type pheromone BAP1(1) (BAP1(1)) from Schizophyllum commune (Split gill fungus).